Here is a 394-residue protein sequence, read N- to C-terminus: Protein NDRG1 (394 aa).

At Ser-2 the chain carries N-acetylserine. 3 positions are modified to phosphoserine: Ser-2, Ser-319, and Ser-326. A disordered region spans residues 325 to 394; that stretch reads RSRTASGSSV…AGPKSMEVSC (70 aa). A compositionally biased stretch (polar residues) spans 327-339; sequence RTASGSSVTSLEG. Thr-328 is modified (phosphothreonine). Ser-330 bears the Phosphoserine; by SGK1 mark. Ser-332 and Ser-333 each carry phosphoserine. The residue at position 335 (Thr-335) is a Phosphothreonine. Phosphoserine is present on Ser-336. Tandem repeats lie at residues 339 to 348, 349 to 358, and 359 to 368. The interval 339–368 is 3 X 10 AA tandem repeats of G-[PST]-R-S-R-S-H-T-S-E; that stretch reads GTRSRSHTSEGPRSRSHTSEGSRSRSHTSE. Thr-340 is subject to Phosphothreonine. Ser-342 is modified (phosphoserine). Positions 345 to 371 are enriched in basic and acidic residues; it reads HTSEGPRSRSHTSEGSRSRSHTSEDAR. Thr-346 is modified (phosphothreonine; by SGK1). Phosphoserine is present on Ser-352. Position 356 is a phosphothreonine; by SGK1 (Thr-356). Ser-362 and Ser-364 each carry phosphoserine. A Phosphothreonine; by SGK1 modification is found at Thr-366. Positions 374 to 386 are enriched in polar residues; that stretch reads ITPNSGATGNNAG. Thr-375 is subject to Phosphothreonine.

This sequence belongs to the NDRG family. Interacts with RAB4A (membrane-bound form); the interaction involves NDRG1 in vesicular recycling of CDH1. Interacts with APOA1, APOA2, PRA1 and RTN1. Post-translationally, under stress conditions, phosphorylated in the C-terminal on many serine and threonine residues. Phosphorylated in vitro by PKA. Phosphorylation enhanced by increased intracellular cAMP levels. Homocysteine induces dephosphorylation. Phosphorylation by SGK1 is cell cycle dependent. As to expression, widely expressed, with highest levels in kidney followed by brain, pancreas, small intestine, colon and spleen (at protein level). Also detected in heart and preputial gland, and in much smaller quantities in other tissues. Not detected in duodenum and prostate. Highly expressed in Schwann cells.

The protein localises to the cytoplasm. Its subcellular location is the cytosol. It localises to the cytoskeleton. The protein resides in the microtubule organizing center. It is found in the centrosome. The protein localises to the nucleus. Its subcellular location is the cell membrane. In terms of biological role, stress-responsive protein involved in hormone responses, cell growth, and differentiation. Acts as a tumor suppressor in many cell types. Necessary but not sufficient for p53/TP53-mediated caspase activation and apoptosis. Required for vesicular recycling of CDH1 and TF. May also function in lipid trafficking. Protects cells from spindle disruption damage. Functions in p53/TP53-dependent mitotic spindle checkpoint. Regulates microtubule dynamics and maintains euploidy. Has a role in cell trafficking notably of the Schwann cell and is necessary for the maintenance and development of the peripheral nerve myelin sheath. In Mus musculus (Mouse), this protein is Protein NDRG1 (Ndrg1).